A 170-amino-acid chain; its full sequence is MQKNAYTFEELLACGRGEMFGPGNAQLPAPPMLMFDRIVRIEAEGGKYGKGYVEAEFDIRPDLWFFDCHFIGDPVMPGCLGLDAMWQLVGFFLGWSGGPGRGRALGVGEVKFTGQVTPDIKKVVYKIDLKRVIMRKLVMGIADGVLEADGKVIYETSDLKVGLFTPEQMA.

H69 is a catalytic residue.

The protein belongs to the thioester dehydratase family. FabA subfamily. Homodimer.

It is found in the cytoplasm. The enzyme catalyses a (3R)-hydroxyacyl-[ACP] = a (2E)-enoyl-[ACP] + H2O. It carries out the reaction (3R)-hydroxydecanoyl-[ACP] = (2E)-decenoyl-[ACP] + H2O. It catalyses the reaction (2E)-decenoyl-[ACP] = (3Z)-decenoyl-[ACP]. It functions in the pathway lipid metabolism; fatty acid biosynthesis. Functionally, necessary for the introduction of cis unsaturation into fatty acids. Catalyzes the dehydration of (3R)-3-hydroxydecanoyl-ACP to E-(2)-decenoyl-ACP and then its isomerization to Z-(3)-decenoyl-ACP. Can catalyze the dehydratase reaction for beta-hydroxyacyl-ACPs with saturated chain lengths up to 16:0, being most active on intermediate chain length. This chain is 3-hydroxydecanoyl-[acyl-carrier-protein] dehydratase, found in Caulobacter vibrioides (strain ATCC 19089 / CIP 103742 / CB 15) (Caulobacter crescentus).